Here is a 191-residue protein sequence, read N- to C-terminus: MAESHGEAKGGEAKGTASAHTEAEGGHGFPPFQKETFPSQIASLVIAFVALYVIVSRVALPKVGAVIDARQKSIDGDLAEAQRLKDESEAAMKAYETELATARARAQAIGAETRDKLAASSEAERKALEDSLAAKLAAAETSIASTRATAMSNVRGIAADAASAIVQQLTGKAPAAKTVEAAVDASLKGTA.

Residues methionine 1 to glutamate 12 are compositionally biased toward basic and acidic residues. The interval methionine 1–proline 31 is disordered. The helical transmembrane segment at proline 38 to leucine 60 threads the bilayer.

The protein belongs to the ATPase B chain family. F-type ATPases have 2 components, F(1) - the catalytic core - and F(0) - the membrane proton channel. F(1) has five subunits: alpha(3), beta(3), gamma(1), delta(1), epsilon(1). F(0) has three main subunits: a(1), b(2) and c(10-14). The alpha and beta chains form an alternating ring which encloses part of the gamma chain. F(1) is attached to F(0) by a central stalk formed by the gamma and epsilon chains, while a peripheral stalk is formed by the delta and b chains.

Its subcellular location is the cell inner membrane. Functionally, f(1)F(0) ATP synthase produces ATP from ADP in the presence of a proton or sodium gradient. F-type ATPases consist of two structural domains, F(1) containing the extramembraneous catalytic core and F(0) containing the membrane proton channel, linked together by a central stalk and a peripheral stalk. During catalysis, ATP synthesis in the catalytic domain of F(1) is coupled via a rotary mechanism of the central stalk subunits to proton translocation. Its function is as follows. Component of the F(0) channel, it forms part of the peripheral stalk, linking F(1) to F(0). The b'-subunit is a diverged and duplicated form of b found in plants and photosynthetic bacteria. The protein is ATP synthase subunit b 2 (atpF2) of Bradyrhizobium sp. (strain ORS 278).